The following is a 379-amino-acid chain: 1-deoxy-D-xylulose 5-phosphate reductoisomerase (379 aa).

Positions 10, 11, 12, 13, 39, and 121 each coordinate NADPH. Lysine 122 lines the 1-deoxy-D-xylulose 5-phosphate pocket. Glutamate 123 contributes to the NADPH binding site. Aspartate 147 provides a ligand contact to Mn(2+). 1-deoxy-D-xylulose 5-phosphate is bound by residues serine 148, glutamate 149, serine 173, and histidine 196. Glutamate 149 is a Mn(2+) binding site. NADPH is bound at residue glycine 202. Serine 209, asparagine 214, lysine 215, and glutamate 218 together coordinate 1-deoxy-D-xylulose 5-phosphate. Glutamate 218 lines the Mn(2+) pocket.

This sequence belongs to the DXR family. Mg(2+) serves as cofactor. Requires Mn(2+) as cofactor.

It carries out the reaction 2-C-methyl-D-erythritol 4-phosphate + NADP(+) = 1-deoxy-D-xylulose 5-phosphate + NADPH + H(+). Its pathway is isoprenoid biosynthesis; isopentenyl diphosphate biosynthesis via DXP pathway; isopentenyl diphosphate from 1-deoxy-D-xylulose 5-phosphate: step 1/6. In terms of biological role, catalyzes the NADPH-dependent rearrangement and reduction of 1-deoxy-D-xylulose-5-phosphate (DXP) to 2-C-methyl-D-erythritol 4-phosphate (MEP). This is 1-deoxy-D-xylulose 5-phosphate reductoisomerase from Chlamydia caviae (strain ATCC VR-813 / DSM 19441 / 03DC25 / GPIC) (Chlamydophila caviae).